The following is a 131-amino-acid chain: Small ribosomal subunit protein uS8 (131 aa).

This sequence belongs to the universal ribosomal protein uS8 family. Part of the 30S ribosomal subunit. Contacts proteins S5 and S12.

One of the primary rRNA binding proteins, it binds directly to 16S rRNA central domain where it helps coordinate assembly of the platform of the 30S subunit. The chain is Small ribosomal subunit protein uS8 from Geobacillus stearothermophilus (Bacillus stearothermophilus).